We begin with the raw amino-acid sequence, 69 residues long: MRAVAIFIVTLLVLECVYFVMSEPDPGQPWQVKAGRPPCYSIPCRKHDECRVGSCSRCNNGLWGDRTCR.

A signal peptide spans 1-23 (MRAVAIFIVTLLVLECVYFVMSE).

Expressed in the fat body, hemocytes and salivary glands of partially-fed female ticks. Not expressed in the midgut.

Its subcellular location is the secreted. Functionally, has antimicrobial activity against B.cereus (MIC=5.8 ug/ml), B.subtilis (MIC=12.3 ug/ml), S.aureus (MIC=10.4 ug/ml), E.coli Edl 933 (MIC=3.2 ug/ml) and E.coli MG/655 (MIC=4.2 ug/ml). Non-hemolytic. The polypeptide is Antimicrobial peptide ISAMP (Ixodes scapularis (Black-legged tick)).